The sequence spans 368 residues: Peptide chain release factor 2 (368 aa).

Glutamine 250 bears the N5-methylglutamine mark.

It belongs to the prokaryotic/mitochondrial release factor family. Post-translationally, methylated by PrmC. Methylation increases the termination efficiency of RF2.

Its subcellular location is the cytoplasm. Peptide chain release factor 2 directs the termination of translation in response to the peptide chain termination codons UGA and UAA. In Mycolicibacterium vanbaalenii (strain DSM 7251 / JCM 13017 / BCRC 16820 / KCTC 9966 / NRRL B-24157 / PYR-1) (Mycobacterium vanbaalenii), this protein is Peptide chain release factor 2.